The sequence spans 328 residues: UPF0324 membrane protein AF_1621 (328 aa).

A run of 11 helical transmembrane segments spans residues 21–39 (LQML…IINL), 43–60 (ALEP…AGNL), 73–95 (YVPF…PYLG), 101–123 (IVAA…SSRL), 130–152 (SILL…SPLI), 162–184 (AIMI…AHYA), 191–213 (FAVL…QLFG), 223–240 (GIRI…SIIY), 245–267 (FYVP…YLPG), 271–293 (QALR…YTVN), and 305–327 (LFAS…GSGA).

This sequence belongs to the UPF0324 family.

It is found in the cell membrane. This Archaeoglobus fulgidus (strain ATCC 49558 / DSM 4304 / JCM 9628 / NBRC 100126 / VC-16) protein is UPF0324 membrane protein AF_1621.